Consider the following 426-residue polypeptide: Tyrosine--tRNA ligase (426 aa).

An L-tyrosine-binding site is contributed by Tyr-38. The 'HIGH' region signature appears at 43–52 (PTADSLHIGS). L-tyrosine contacts are provided by Tyr-176 and Gln-180. Residues 236 to 240 (KFGKT) carry the 'KMSKS' region motif. Position 239 (Lys-239) interacts with ATP. The S4 RNA-binding domain maps to 359 to 426 (QTIVEVLTQS…KKLFNLYIWK (68 aa)).

Belongs to the class-I aminoacyl-tRNA synthetase family. TyrS type 1 subfamily. In terms of assembly, homodimer.

The protein resides in the cytoplasm. It catalyses the reaction tRNA(Tyr) + L-tyrosine + ATP = L-tyrosyl-tRNA(Tyr) + AMP + diphosphate + H(+). Catalyzes the attachment of tyrosine to tRNA(Tyr) in a two-step reaction: tyrosine is first activated by ATP to form Tyr-AMP and then transferred to the acceptor end of tRNA(Tyr). The polypeptide is Tyrosine--tRNA ligase (Aliivibrio fischeri (strain ATCC 700601 / ES114) (Vibrio fischeri)).